The sequence spans 818 residues: Glycerol-3-phosphate acyltransferase (818 aa).

Residues 308–313 (CHRSHM) carry the HXXXXD motif motif.

It belongs to the GPAT/DAPAT family.

The protein localises to the cell inner membrane. The catalysed reaction is sn-glycerol 3-phosphate + an acyl-CoA = a 1-acyl-sn-glycero-3-phosphate + CoA. It functions in the pathway phospholipid metabolism; CDP-diacylglycerol biosynthesis; CDP-diacylglycerol from sn-glycerol 3-phosphate: step 1/3. The protein is Glycerol-3-phosphate acyltransferase of Alteromonas mediterranea (strain DSM 17117 / CIP 110805 / LMG 28347 / Deep ecotype).